Here is a 385-residue protein sequence, read N- to C-terminus: 4-hydroxy-3-methylbut-2-en-1-yl diphosphate synthase (flavodoxin) 1 (385 aa).

[4Fe-4S] cluster is bound by residues Cys280, Cys283, Cys315, and Glu322.

This sequence belongs to the IspG family. [4Fe-4S] cluster serves as cofactor.

The catalysed reaction is (2E)-4-hydroxy-3-methylbut-2-enyl diphosphate + oxidized [flavodoxin] + H2O + 2 H(+) = 2-C-methyl-D-erythritol 2,4-cyclic diphosphate + reduced [flavodoxin]. It functions in the pathway isoprenoid biosynthesis; isopentenyl diphosphate biosynthesis via DXP pathway; isopentenyl diphosphate from 1-deoxy-D-xylulose 5-phosphate: step 5/6. Functionally, converts 2C-methyl-D-erythritol 2,4-cyclodiphosphate (ME-2,4cPP) into 1-hydroxy-2-methyl-2-(E)-butenyl 4-diphosphate. In Streptomyces avermitilis (strain ATCC 31267 / DSM 46492 / JCM 5070 / NBRC 14893 / NCIMB 12804 / NRRL 8165 / MA-4680), this protein is 4-hydroxy-3-methylbut-2-en-1-yl diphosphate synthase (flavodoxin) 1.